The following is an 81-amino-acid chain: uncharacterized protein (81 aa).

Residues Ala46 to Ala81 are disordered. Residues Val51 to Gln73 show a composition bias toward basic residues.

This is an uncharacterized protein from Frog virus 3 (isolate Goorha) (FV-3).